The sequence spans 101 residues: Ubiquitin-related modifier 1 homolog (101 aa).

1-thioglycine is present on Gly101. Gly101 participates in a covalent cross-link: Glycyl lysine isopeptide (Gly-Lys) (interchain with K-? in acceptor proteins).

Belongs to the URM1 family. In terms of assembly, interacts with cer. Post-translationally, C-terminal thiocarboxylation occurs in 2 steps, it is first acyl-adenylated (-COAMP) via the hesA/moeB/thiF part of the MOCS3 homolog, then thiocarboxylated (-COSH) via the rhodanese domain of the MOCS3 homolog.

It localises to the cytoplasm. It participates in tRNA modification; 5-methoxycarbonylmethyl-2-thiouridine-tRNA biosynthesis. Acts as a sulfur carrier required for 2-thiolation of mcm(5)S(2)U at tRNA wobble positions of cytosolic tRNA(Lys), tRNA(Glu) and tRNA(Gln). Serves as sulfur donor in tRNA 2-thiolation reaction by being thiocarboxylated (-COSH) at its C-terminus by MOCS3. The sulfur is then transferred to tRNA to form 2-thiolation of mcm(5)S(2)U. Also acts as a ubiquitin-like protein (UBL) that is covalently conjugated via an isopeptide bond to lysine residues of target proteins such as Prx2/Jafrac1, Ciao1, Eip71CD and GILT1. The thiocarboxylated form serves as substrate for conjugation and oxidative stress specifically induces the formation of UBL-protein conjugates. This Drosophila sechellia (Fruit fly) protein is Ubiquitin-related modifier 1 homolog.